We begin with the raw amino-acid sequence, 197 residues long: C-type lectin domain family 3 member A (197 aa).

Positions Met-1–Ala-24 are cleaved as a signal peptide. Cystine bridges form between Cys-68–Cys-78, Cys-95–Cys-191, and Cys-167–Cys-183. In terms of domain architecture, C-type lectin spans Phe-74 to Glu-192.

The protein resides in the secreted. Promotes cell adhesion to laminin and fibronectin. In Bos taurus (Bovine), this protein is C-type lectin domain family 3 member A (CLEC3A).